The chain runs to 215 residues: 2-dehydro-3-deoxy-phosphogluconate aldolase (215 aa).

The active-site Proton acceptor is the E46. Pyruvate-binding residues include R50, T74, and K134. The active-site Schiff-base intermediate with substrate is K134.

Belongs to the KHG/KDPG aldolase family. In terms of assembly, homotrimer.

It catalyses the reaction 2-dehydro-3-deoxy-6-phospho-D-gluconate = D-glyceraldehyde 3-phosphate + pyruvate. Its pathway is carbohydrate acid metabolism; 2-dehydro-3-deoxy-D-gluconate degradation; D-glyceraldehyde 3-phosphate and pyruvate from 2-dehydro-3-deoxy-D-gluconate: step 2/2. Involved in the degradation of glucose via the Entner-Doudoroff pathway. Catalyzes the reversible, stereospecific retro-aldol cleavage of 2-keto-3-deoxy-6-phosphogluconate (KDPG) to pyruvate and D-glyceraldehyde-3-phosphate. Involved in the degradation of 3,6-anhydro-L-galactose (L-AnG), which is the major monomeric sugar of red macroalgae. The cleavage of KDPG to glyceraldehyde 3-phosphate and pyruvate is the sixth step of this pathway. The polypeptide is 2-dehydro-3-deoxy-phosphogluconate aldolase (Pseudoalteromonas atlantica (strain T6c / ATCC BAA-1087)).